We begin with the raw amino-acid sequence, 450 residues long: V-type proton ATPase subunit H (450 aa).

It belongs to the V-ATPase H subunit family. As to quaternary structure, V-ATPase is a heteromultimeric enzyme composed of a peripheral catalytic V1 complex (components A to H) attached to an integral membrane V0 proton pore complex (components: a, c, c', c'', d, e, f and VOA1).

It localises to the vacuole membrane. Its function is as follows. Subunit of the V1 complex of vacuolar(H+)-ATPase (V-ATPase), a multisubunit enzyme composed of a peripheral complex (V1) that hydrolyzes ATP and a membrane integral complex (V0) that translocates protons. V-ATPase is responsible for acidifying and maintaining the pH of intracellular compartments. This subunit is essential for activity, but not assembly, of the enzyme complex. This subunit is also required for silencing the ATPase activity of V-ATPase when V1 is detached from V0. The sequence is that of V-type proton ATPase subunit H (vma13) from Schizosaccharomyces pombe (strain 972 / ATCC 24843) (Fission yeast).